A 231-amino-acid chain; its full sequence is MAQRSQQASPPPNLAADKAAALRLTPVSRETESRLDAYVALLLQWQAKTNLISPATLPQLWTRHIADSLQLLTVAPDARTWLDFGSGGGFPGVVLACAMAELGGSVTLVERNAKKAAFLREALRVSGGVGQVILADIGDSVDRFPPHIDCITARAVAPLHQLIGFAEPLLHRGGKALFLKGQDVEAELTEAAKYWRLQPRLHASLTGGQGWIVELDRIERQSATTINGTRA.

Residues G85, F90, and R154 each coordinate S-adenosyl-L-methionine.

It belongs to the methyltransferase superfamily. RNA methyltransferase RsmG family.

Its subcellular location is the cytoplasm. The catalysed reaction is guanosine(527) in 16S rRNA + S-adenosyl-L-methionine = N(7)-methylguanosine(527) in 16S rRNA + S-adenosyl-L-homocysteine. Functionally, specifically methylates the N7 position of guanine in position 527 of 16S rRNA. The sequence is that of Ribosomal RNA small subunit methyltransferase G from Rhodopseudomonas palustris (strain BisA53).